A 141-amino-acid chain; its full sequence is Ribonuclease VapC38 (141 aa).

Aspartate 5 and aspartate 102 together coordinate Mg(2+).

The protein belongs to the PINc/VapC protein family. It depends on Mg(2+) as a cofactor.

It localises to the secreted. Functionally, toxic component of a type II toxin-antitoxin (TA) system. An RNase. Its cognate antitoxin is VapB38. This Mycobacterium tuberculosis (strain ATCC 25618 / H37Rv) protein is Ribonuclease VapC38.